The chain runs to 259 residues: Chloroplastic group IIB intron splicing facilitator CRS2, chloroplastic (259 aa).

The disordered stretch occupies residues 1-21 (MSLAVATPASARLSPLTTSSP). The N-terminal 49 residues, 1 to 49 (MSLAVATPASARLSPLTTSSPEPCRRRRLLLSAAAPLRRTRLRRRIAVV), are a transit peptide targeting the chloroplast. TRNA is bound at residue tyrosine 77. Histidine 82 functions as the Proton acceptor in the catalytic mechanism. Tyrosine 127, asparagine 129, and asparagine 175 together coordinate tRNA.

Belongs to the PTH family. CRS2 subfamily. As to quaternary structure, part of large ribonucleo-protein complexes that include group IIB introns and either CAF1 or CAF2.

It is found in the plastid. It localises to the chloroplast stroma. In terms of biological role, required for the splicing of group IIB introns in chloroplasts. The protein is Chloroplastic group IIB intron splicing facilitator CRS2, chloroplastic of Oryza sativa subsp. japonica (Rice).